A 595-amino-acid polypeptide reads, in one-letter code: MDEETAYELERQKTIAENRALLDSLGLDPAGASSPFGSSPAPTSNKTKPKPKPAPKKRKAAAVIAVDEGPRRRSGRIAGLEADGDAFKAKVEEEEKEREILRVVSRKEREKVMDVGKMVEDTPEDEIKDMEKYLQSIAELSNPRTYPAGTVSAREAYADSDTVPSEVQRLKDAFKDMSLKGNTKVTNERVFSMCVHPEKTKTLVLVGDKYGQLGIWDALGPPMEKPENEDDTSGLLRAEGEDEYQEGRVWRVQAHAKNSISCMKVDPVNGSGLFSTAYDCSLRHLSFSTLQSTELFSFQDEDLLINHFDLLPSAQEAWMVDKNGGISHWDTRESKRESGRRRWVVQEEGRGAKLGGVSVNPLMPHLICTAGNDQHVRIWDTRHLFSISSNLVPSAAAIEEEEEGTSTLSGQSSSLPHDTHPTRESDYSTVTSYLASPRGKGLMRAKWQHGKSCSSAYWDPWGRRILTTSYDDHLRVFNIDPGSSLVDDRAVGSLLQPNGFKPTKVVRHNCQTGRWLTILRAQWSLNMEYMPHFTVGNMKRTLDVVSATGEKIVGLWTDDVTAVPTVTASHPNIVDRVVGGNTSGRIQLWSSGDHI.

A disordered region spans residues 20-79 (ALLDSLGLDPAGASSPFGSSPAPTSNKTKPKPKPAPKKRKAAAVIAVDEGPRRRSGRIAG). Positions 29–46 (PAGASSPFGSSPAPTSNK) are enriched in low complexity. Over residues 47 to 60 (TKPKPKPAPKKRKA) the composition is skewed to basic residues. WD repeat units follow at residues 185 to 226 (VTNE…MEKP), 255 to 297 (HAKN…ELFS), 300 to 339 (DEDL…RESG), and 349 to 389 (GRGA…SISS). Positions 397–429 (AIEEEEEGTSTLSGQSSSLPHDTHPTRESDYST) are disordered. The segment covering 405–415 (TSTLSGQSSSL) has biased composition (low complexity). Over residues 417–426 (HDTHPTRESD) the composition is skewed to basic and acidic residues. WD repeat units follow at residues 448-487 (QHGK…SLVD), 519-556 (LRAQ…VGLW), and 558-595 (DDVT…GDHI).

This sequence belongs to the WD repeat DDB2/WDR76 family.

DNA-binding protein that binds to both single- and double-stranded DNA. Binds preferentially to UV-damaged DNA. May be involved in DNA-metabolic processes. This Cryptococcus neoformans var. neoformans serotype D (strain B-3501A) (Filobasidiella neoformans) protein is DNA damage-binding protein CMR1.